We begin with the raw amino-acid sequence, 459 residues long: Vanillin aminotransferase (459 aa).

Pyridoxal 5'-phosphate contacts are provided by residues 115–116 (GS) and aspartate 255. The residue at position 284 (lysine 284) is an N6-(pyridoxal phosphate)lysine. 320–321 (FT) contributes to the pyridoxal 5'-phosphate binding site. A coiled-coil region spans residues 428–459 (LSLEELDELIRIYGKALKDTEKRVEELKSQKK).

This sequence belongs to the class-III pyridoxal-phosphate-dependent aminotransferase family. As to expression, expressed in placental tissue of immature fruit.

The enzyme catalyses vanillin + L-alanine = vanillylamine + pyruvate. The protein operates within aromatic compound metabolism; phenylpropanoid biosynthesis. Involved in the biosynthesis of capsaicinoids natural products, pungent alkaloids synthesized from phenylpropanoid intermediates in the placental tissue of chili pepper fruit acting as repellant on herbivorous mammals and conferring spiciness to hot peppers. Can transfer an amine from vanillylamine to pyruvate forming vanillin and L-alanine. Can use pyruvate or oxaloacetate, but not 2-oxoglutarate as amino group acceptors. Is able to convert (S)-1-phenylethylamine into acetophenone in vitro. This Capsicum chinense (Scotch bonnet) protein is Vanillin aminotransferase.